The chain runs to 310 residues: MAAKEGSRIFVGGLSPEVTDRDLERAFSRFGDILDCQIMLERDTGRSRGFGFITFADRRAMDESIREMHGRDFGDRVISVNRAEPKLGRDDGESHGSRGGRDSGYSIAGKGSFGGGGGGGGRVGEDECFKCGRVGHWARDCPSAGGGRGGPVGGFSSRASAYGGSDGRVDRYADRDRYVDRERYIDDRYDGAARYGARDRFDSREAYIPRDRYASDRYAAPADRFAGGDRYSRGSDRYPPGSYDKARSFERDIAPSAGSDRYGGGRAGGPIRGGGEEGRGFRSRAGAPYERPSRSGGGGAYPSSSTFDRY.

Positions 7–85 (SRIFVGGLSP…RVISVNRAEP (79 aa)) constitute an RRM domain. Residue Ser15 is modified to Phosphoserine. A disordered region spans residues 82-120 (RAEPKLGRDDGESHGSRGGRDSGYSIAGKGSFGGGGGGG). Residues 83 to 101 (AEPKLGRDDGESHGSRGGR) show a composition bias toward basic and acidic residues. A compositionally biased stretch (gly residues) spans 111–120 (GSFGGGGGGG). The segment at 128 to 143 (CFKCGRVGHWARDCPS) adopts a CCHC-type zinc-finger fold. A disordered region spans residues 224–310 (RFAGGDRYSR…YPSSSTFDRY (87 aa)). Basic and acidic residues-rich tracts occupy residues 226-236 (AGGDRYSRGSD) and 244-253 (DKARSFERDI). Gly residues predominate over residues 261–273 (RYGGGRAGGPIRG). The residue at position 295 (Ser295) is a Phosphoserine.

As to expression, expressed in roots, rosette and cauline leaves, stems, floral buds and flowers.

Its subcellular location is the nucleus. Functionally, binds RNA and DNA sequences non-specifically. May be involved in tolerance to cold stress. In Arabidopsis thaliana (Mouse-ear cress), this protein is Glycine-rich RNA-binding protein RZ1C.